The primary structure comprises 71 residues: Glucose-repressible gene protein (71 aa).

The tract at residues 19 to 71 is disordered; the sequence is TATASKEANKDVAKDSNQGVGTRLNAAGDAISDKVSENKHDAKAEAHKQGATH. Residues 49–71 are compositionally biased toward basic and acidic residues; it reads ISDKVSENKHDAKAEAHKQGATH.

This Neurospora crassa (strain ATCC 24698 / 74-OR23-1A / CBS 708.71 / DSM 1257 / FGSC 987) protein is Glucose-repressible gene protein (grg-1).